Reading from the N-terminus, the 341-residue chain is Phenylalanine--tRNA ligase alpha subunit (341 aa).

A Mg(2+)-binding site is contributed by E254.

This sequence belongs to the class-II aminoacyl-tRNA synthetase family. Phe-tRNA synthetase alpha subunit type 1 subfamily. In terms of assembly, tetramer of two alpha and two beta subunits. Mg(2+) is required as a cofactor.

It is found in the cytoplasm. The enzyme catalyses tRNA(Phe) + L-phenylalanine + ATP = L-phenylalanyl-tRNA(Phe) + AMP + diphosphate + H(+). The chain is Phenylalanine--tRNA ligase alpha subunit from Chlorobium phaeovibrioides (strain DSM 265 / 1930) (Prosthecochloris vibrioformis (strain DSM 265)).